A 162-amino-acid polypeptide reads, in one-letter code: Transcription elongation factor GreA (162 aa).

Residues 46–77 are a coiled coil; that stretch reads RENAEYKAAREEQTRLNNMVTRLQEEIERAQV.

This sequence belongs to the GreA/GreB family.

Its function is as follows. Necessary for efficient RNA polymerase transcription elongation past template-encoded arresting sites. The arresting sites in DNA have the property of trapping a certain fraction of elongating RNA polymerases that pass through, resulting in locked ternary complexes. Cleavage of the nascent transcript by cleavage factors such as GreA or GreB allows the resumption of elongation from the new 3'terminus. GreA releases sequences of 2 to 3 nucleotides. The polypeptide is Transcription elongation factor GreA (Treponema pallidum (strain Nichols)).